The following is a 614-amino-acid chain: Putative Na(+)/H(+) antiporter YjbQ (614 aa).

The next 13 helical transmembrane spans lie at 3-23 (HTSV…PILL), 32-52 (VVVA…NLVV), 57-77 (WLQT…GLEI), 107-127 (IFVG…LAGF), 130-150 (NAFL…VPTL), 163-183 (IILL…AVFS), 193-213 (MWLL…GRVF), 225-244 (GTIQ…LVAL), 248-267 (LGAE…SLLS), 282-302 (GFLI…WTLF), 307-327 (ILIM…IPVM), 338-358 (IFAS…AATI), and 368-388 (NMSG…PICF). The RCK N-terminal domain occupies 401-519 (KKTITFIGAN…EQGISIFSIL (119 aa)). One can recognise an RCK C-terminal domain in the interval 533–614 (PGVMKLLTNQ…VTDLKKTLEG (82 aa)).

This sequence belongs to the monovalent cation:proton antiporter 2 (CPA2) transporter (TC 2.A.37) family.

It is found in the cell membrane. With respect to regulation, binds cyclic di-AMP (c-di-AMP), which may regulate the transporter activity. Functionally, probable Na(+)/H(+) antiporter. The protein is Putative Na(+)/H(+) antiporter YjbQ of Bacillus subtilis (strain 168).